A 1182-amino-acid chain; its full sequence is Tyrosine-protein kinase ABL2 (1182 aa).

Disordered regions lie at residues 1 to 47 and 60 to 80; these read MGQQ…TGFN and EDGF…HRPY. Glycine 2 carries the N-myristoyl glycine lipid modification. Positions 2 to 106 are CAP; the sequence is GQQVGRVGEA…SKENLLGATE (105 aa). A compositionally biased stretch (low complexity) spans 20–30; the sequence is RGIRGSSAARP. The residue at position 97 (serine 97) is a Phosphoserine. The SH3 domain maps to 107-167; that stretch reads SDPNLFVALY…PSNYITPVNS (61 aa). Residues tyrosine 116, tyrosine 161, tyrosine 174, tyrosine 185, tyrosine 218, and tyrosine 231 each carry the phosphotyrosine modification. The SH2 domain occupies 173–263; the sequence is WYHGPVSRSA…GLVTTLHYPA (91 aa). Phosphotyrosine; by ABL1 and autocatalysis is present on tyrosine 261. The residue at position 272 (tyrosine 272) is a Phosphotyrosine; by autocatalysis. Serine 275 carries the post-translational modification Phosphoserine. Residues 288–539 enclose the Protein kinase domain; sequence ITMKHKLGGG…PSFAETHQAF (252 aa). 294 to 302 is an ATP binding site; that stretch reads LGGGQYGEV. Phosphotyrosine is present on residues tyrosine 299 and tyrosine 303. ATP-binding positions include lysine 317 and 362 to 368; that span reads EYMPYGN. The Proton acceptor role is filled by aspartate 409. A Kinase activation loop motif is present at residues 427–451; the sequence is DFGLSRLMTGDTYTAHAGAKFPIKW. Tyrosine 439 carries the phosphotyrosine; by autocatalysis and SRC-type Tyr-kinases modification. Tyrosine 459 carries the post-translational modification Phosphotyrosine. The residue at position 568 (tyrosine 568) is a Phosphotyrosine; by autocatalysis. A disordered region spans residues 611-641; the sequence is IRGAQASSGSPALPRKQRDKSPSSLLEDAKE. Phosphoserine occurs at positions 620, 631, and 633. Aspartate 647 is subject to Phosphotyrosine. The tract at residues 654–674 is disordered; that stretch reads SSFMKKRNAPTPPKRSSSFRE. Position 655 is a phosphoserine (serine 655). Positions 658–660 match the Nuclear localization signal motif; the sequence is KKR. 2 positions are modified to phosphotyrosine: alanine 662 and arginine 668. Phosphoserine occurs at positions 669, 670, and 671. Phosphotyrosine is present on residues tyrosine 683 and tyrosine 718. Tyrosine 683 bears the Phosphotyrosine; by autocatalysis mark. The segment at 694–930 is F-actin-binding; the sequence is SLQHADGFSF…PVLPTTHNHK (237 aa). The interval 763 to 794 is disordered; it reads LRAGKPTASDDTSKPFPRSNSTSSMSSGLPEQ. Position 776 is an N6-acetyllysine (lysine 776). A compositionally biased stretch (polar residues) spans 780–791; that stretch reads RSNSTSSMSSGL. Residue serine 783 is modified to Phosphoserine. Threonine 800 bears the Phosphothreonine mark. The span at 807–823 shows a compositional bias: polar residues; it reads RSKLQLERTVSTSSQPE. The interval 807–851 is disordered; it reads RSKLQLERTVSTSSQPEENVDRANDMLPKKSEESAAPSRERPKAK. Phosphoserine occurs at positions 817 and 820. A compositionally biased stretch (basic and acidic residues) spans 825–849; sequence NVDRANDMLPKKSEESAAPSRERPK. 2 positions are modified to phosphoserine: serine 915 and serine 936. Residues 964–1024 are disordered; it reads HQVTSSGDKD…TSETQEGGKK (61 aa). Positions 1010–1019 are enriched in polar residues; the sequence is TAGQSTSETQ. An F-actin-binding region spans residues 1020 to 1182; the sequence is EGGKKAALGA…VQEISDVVQR (163 aa).

Belongs to the protein kinase superfamily. Tyr protein kinase family. ABL subfamily. Interacts with PSMA7. Interacts with CTTN. Found in a complex with ABL1, ABL2, CRK and UNC119; leading to the inhibition of CRK phosphorylation by ABL kinases. It depends on Mg(2+) as a cofactor. Requires Mn(2+) as cofactor. Post-translationally, phosphorylated at Tyr-261 by ABL1 in response to oxidative stress. Phosphorylated by PDGFRB. In terms of processing, polyubiquitinated. Polyubiquitination of ABL2 leads to degradation. In terms of tissue distribution, widely expressed.

The protein localises to the cytoplasm. It localises to the cytoskeleton. It catalyses the reaction L-tyrosyl-[protein] + ATP = O-phospho-L-tyrosyl-[protein] + ADP + H(+). Stabilized in the inactive form by an association between the SH3 domain and the SH2-TK linker region, interactions of the N-terminal cap, and contributions from an N-terminal myristoyl group and phospholipids. Activated by autophosphorylation as well as by SRC-family kinase-mediated phosphorylation. Activated by RIN1 binding to the SH2 and SH3 domains. Inhibited by imatinib mesylate (Gleevec) which is used for the treatment of chronic myeloid leukemia (CML). Phosphatidylinositol 4,5-bisphosphate (PIP2), a highly abundant phosphoinositide known to regulate cytoskeletal and membrane proteins, inhibits the tyrosine kinase activity. Functionally, non-receptor tyrosine-protein kinase that plays an ABL1-overlapping role in key processes linked to cell growth and survival such as cytoskeleton remodeling in response to extracellular stimuli, cell motility and adhesion and receptor endocytosis. Coordinates actin remodeling through tyrosine phosphorylation of proteins controlling cytoskeleton dynamics like MYH10 (involved in movement); CTTN (involved in signaling); or TUBA1 and TUBB (microtubule subunits). Binds directly F-actin and regulates actin cytoskeletal structure through its F-actin-bundling activity. Involved in the regulation of cell adhesion and motility through phosphorylation of key regulators of these processes such as CRK, CRKL, DOK1 or ARHGAP35. Adhesion-dependent phosphorylation of ARHGAP35 promotes its association with RASA1, resulting in recruitment of ARHGAP35 to the cell periphery where it inhibits RHO. Phosphorylates multiple receptor tyrosine kinases like PDGFRB and other substrates which are involved in endocytosis regulation such as RIN1. In brain, may regulate neurotransmission by phosphorylating proteins at the synapse. ABL2 also acts as a regulator of multiple pathological signaling cascades during infection. Pathogens can highjack ABL2 kinase signaling to reorganize the host actin cytoskeleton for multiple purposes, like facilitating intracellular movement and host cell exit. Finally, functions as its own regulator through autocatalytic activity as well as through phosphorylation of its inhibitor, ABI1. Positively regulates chemokine-mediated T-cell migration, polarization, and homing to lymph nodes and immune-challenged tissues, potentially via activation of NEDD9/HEF1 and RAP1. The protein is Tyrosine-protein kinase ABL2 (ABL2) of Homo sapiens (Human).